A 60-amino-acid chain; its full sequence is Potassium channel toxin MeuTXKalpha3 (60 aa).

The first 22 residues, 1 to 22 (MKNYCGIITLFLAIISATGVFC), serve as a signal peptide directing secretion. 3 disulfides stabilise this stretch: cysteine 32–cysteine 50, cysteine 37–cysteine 55, and cysteine 41–cysteine 57. Proline 59 bears the Proline amide mark.

This sequence belongs to the short scorpion toxin superfamily. Potassium channel inhibitor family. Expressed by the venom gland.

The protein resides in the secreted. May block voltage-gated potassium channels (Kv). This chain is Potassium channel toxin MeuTXKalpha3, found in Mesobuthus eupeus (Lesser Asian scorpion).